We begin with the raw amino-acid sequence, 275 residues long: uncharacterized protein (275 aa).

Residue Asp-45 coordinates NADPH. Active-site proton donor residues include Tyr-50 and His-111. The NADPH site is built by Ser-139, Gln-162, Leu-191, Lys-196, Ser-232, Ser-233, and Arg-237.

This sequence belongs to the aldo/keto reductase family.

It localises to the cytoplasm. Its subcellular location is the nucleus. This is an uncharacterized protein from Schizosaccharomyces pombe (strain 972 / ATCC 24843) (Fission yeast).